The following is a 735-amino-acid chain: Alpha-adducin (735 aa).

Met-1 carries the post-translational modification N-acetylmethionine. Low complexity predominate over residues 1–11 (MNGDTRAAVVT). The tract at residues 1–21 (MNGDTRAAVVTSPPPTTAPHK) is disordered. Ser-12, Ser-59, and Ser-64 each carry phosphoserine. Phosphothreonine is present on Thr-331. 3 positions are modified to phosphoserine: Ser-334, Ser-353, and Ser-355. Thr-358 is subject to Phosphothreonine. Residues Ser-364, Ser-366, Ser-408, and Ser-427 each carry the phosphoserine modification. Disordered stretches follow at residues 418 to 487 (GHSF…AVPN) and 576 to 735 (RREV…KSDS). Thr-429 bears the Phosphothreonine mark. Phosphoserine is present on residues Ser-431 and Ser-436. The segment covering 440 to 455 (QQREKTRWLHSGRGDD) has biased composition (basic and acidic residues). Thr-445 bears the Phosphothreonine; by ROCK2 mark. Phosphoserine occurs at positions 464 and 465. A Phosphothreonine; by ROCK2 modification is found at Thr-480. The residue at position 481 (Ser-481) is a Phosphoserine; by PKA. Basic and acidic residues predominate over residues 576-601 (RREVERKQKGSEENLDETREQKEKSP). A phosphoserine mark is found at Ser-586, Ser-600, and Ser-605. Thr-610 is modified (phosphothreonine). Ser-613 is subject to Phosphoserine. Thr-614 is modified (phosphothreonine). Residues 698 to 712 (GSPMDPGSDGSPGKS) are compositionally biased toward low complexity. Ser-705, Ser-708, and Ser-712 each carry phosphoserine. Over residues 713–735 (PSKKKKKFRTPSFLKKSKKKSDS) the composition is skewed to basic residues. Ser-714 is modified (phosphoserine; by PKC). The tract at residues 715–732 (KKKKKFRTPSFLKKSKKK) is interaction with calmodulin. Position 724 is a phosphoserine; by PKA and PKC (Ser-724).

This sequence belongs to the aldolase class II family. Adducin subfamily. As to quaternary structure, heterodimer of an alpha and a beta subunit or an alpha and a gamma subunit.

The protein resides in the cytoplasm. Its subcellular location is the cytoskeleton. It is found in the cell membrane. Membrane-cytoskeleton-associated protein that promotes the assembly of the spectrin-actin network. Binds to calmodulin. This is Alpha-adducin (Add1) from Mus musculus (Mouse).